We begin with the raw amino-acid sequence, 946 residues long: DNA primase (946 aa).

The disordered stretch occupies residues 596-626; sequence RDTEEDEDGKEDKNNVPDNGVFQKTTSSVDT. Polar residues predominate over residues 617–626; sequence FQKTTSSVDT. The segment at 881–920 adopts a CHC2-type zinc-finger fold; that stretch reads CLNYTHRNPQETVQVFIDLRTEHSYALWASLWSRCFTKKC.

Belongs to the herpesviridae DNA primase family. Associates with the helicase and the primase-associated factor to form the helicase-primase factor.

Its subcellular location is the host nucleus. Functionally, essential component of the helicase/primase complex. Unwinds the DNA at the replication forks and generates single-stranded DNA for both leading and lagging strand synthesis. The primase initiates primer synthesis and thereby produces large amount of short RNA primers on the lagging strand that the polymerase elongates using dNTPs. The polypeptide is DNA primase (UL70) (Human cytomegalovirus (strain AD169) (HHV-5)).